The primary structure comprises 372 residues: Carbamoyl phosphate synthase small chain (372 aa).

Positions Met1–Pro179 are CPSase. L-glutamine contacts are provided by Ser45, Gly231, and Gly233. The 187-residue stretch at Asp183–Gln369 folds into the Glutamine amidotransferase type-1 domain. Catalysis depends on Cys258, which acts as the Nucleophile. L-glutamine-binding residues include Leu259, Gln262, Asn300, Gly302, and Phe303. Residues His342 and Glu344 contribute to the active site.

This sequence belongs to the CarA family. In terms of assembly, composed of two chains; the small (or glutamine) chain promotes the hydrolysis of glutamine to ammonia, which is used by the large (or ammonia) chain to synthesize carbamoyl phosphate. Tetramer of heterodimers (alpha,beta)4.

It catalyses the reaction hydrogencarbonate + L-glutamine + 2 ATP + H2O = carbamoyl phosphate + L-glutamate + 2 ADP + phosphate + 2 H(+). It carries out the reaction L-glutamine + H2O = L-glutamate + NH4(+). The protein operates within amino-acid biosynthesis; L-arginine biosynthesis; carbamoyl phosphate from bicarbonate: step 1/1. It functions in the pathway pyrimidine metabolism; UMP biosynthesis via de novo pathway; (S)-dihydroorotate from bicarbonate: step 1/3. Functionally, small subunit of the glutamine-dependent carbamoyl phosphate synthetase (CPSase). CPSase catalyzes the formation of carbamoyl phosphate from the ammonia moiety of glutamine, carbonate, and phosphate donated by ATP, constituting the first step of 2 biosynthetic pathways, one leading to arginine and/or urea and the other to pyrimidine nucleotides. The small subunit (glutamine amidotransferase) binds and cleaves glutamine to supply the large subunit with the substrate ammonia. This is Carbamoyl phosphate synthase small chain from Akkermansia muciniphila (strain ATCC BAA-835 / DSM 22959 / JCM 33894 / BCRC 81048 / CCUG 64013 / CIP 107961 / Muc).